Reading from the N-terminus, the 1605-residue chain is Nuclear pore complex protein Nup153 (1605 aa).

The segment covering 1–16 has biased composition (gly residues); it reads MAAAGGGGPGGPGTGG. Disordered stretches follow at residues 1 to 44 and 185 to 208; these read MAAA…GIIS and STSQHDDDNISTTSGFSSRASDKD. Composition is skewed to polar residues over residues 27–44 and 194–203; these read SGRTPYSKSRQQQQGIIS and ISTTSGFSSR. Residues 249-250 form repeat 1; that stretch reads FG. Positions 249–1556 are 33 X 2 AA repeats of F-G; that stretch reads FGSLSPSLGN…NSSGGVFTFN (1308 aa). Disordered regions lie at residues 332–373, 397–476, and 497–522; these read SPLA…PFPP, LTPS…GPVL, and SGSATSPISVTKPANSTTCRLTSSSP. Residues 397–409 are compositionally biased toward polar residues; that stretch reads LTPSAVSNTNSRR. Residues 410 to 420 show a composition bias toward basic and acidic residues; that stretch reads IQPDKHNESRK. Composition is skewed to polar residues over residues 421 to 432 and 497 to 517; these read NNLQTTSQSHSF and SGSATSPISVTKPANSTTCRL. The RanBP2-type 1 zinc finger occupies 655-684; the sequence is AFGLWQCSACFHENMSSDSNCISCSALKPR. Residues 656–657 form repeat 2; the sequence is FG. Residues Cys661, Cys664, Cys675, and Cys678 each contribute to the Zn(2+) site. The tract at residues 686–711 is disordered; sequence TETSKKLPASPPSSNTKSTVPLSSTP. A compositionally biased stretch (polar residues) spans 697–711; the sequence is PSSNTKSTVPLSSTP. RanBP2-type zinc fingers lie at residues 720–749, 790–819, 842–871, and 906–935; these read PAGMWDCDTCLVQNKAEVTKCVACETPKPG, PMGSWECTVCHMQNKTEDNTCVGCKAEKPG, PTGSWDCDVCLIQNKPEANKCIACESAKPG, and SAGSWDCDVCLVENKPEATKCVACETSKPG. Residues Cys726, Cys729, Cys740, Cys743, Cys796, Cys799, Cys810, Cys813, Cys848, Cys851, Cys862, and Cys865 each contribute to the Zn(2+) site. Repeat copies occupy residues 943–944, 959–960, 988–989, 1007–1008, 1021–1022, 1044–1045, 1100–1101, 1116–1117, 1134–1135, 1148–1149, 1167–1168, 1188–1189, 1227–1228, 1243–1244, 1259–1260, 1275–1276, 1291–1292, 1307–1308, 1339–1340, 1356–1357, 1371–1372, 1382–1383, 1414–1415, 1430–1431, 1448–1449, 1470–1471, 1482–1483, 1502–1503, 1512–1513, 1521–1522, and 1535–1536. Residues 1499–1518 show a composition bias toward polar residues; it reads VPAFGSSSAQPPVFGQQATQ. Residues 1499-1529 form a disordered region; that stretch reads VPAFGSSSAQPPVFGQQATQPSFGSPAAPSA. A compositionally biased stretch (low complexity) spans 1519 to 1529; the sequence is PSFGSPAAPSA. A disordered region spans residues 1556–1605; it reads NANSGSTTQPPPPGYMFNAAAPGFNMGTNGRTTPASTISTRKIKTARRRK. Positions 1581 to 1595 are enriched in polar residues; sequence MGTNGRTTPASTIST. Residues 1596 to 1605 show a composition bias toward basic residues; sequence RKIKTARRRK.

Belongs to the NUP153 family. Interacts (via C-terminal domain) with the nuclear receptor kpnb1; the interaction occurs in a RanGTP-dependent manner. Associates with the Importin alpha/Importin beta receptor. Requires Zn(2+) as cofactor. In terms of tissue distribution, egg (at protein level).

The protein resides in the nucleus membrane. Its subcellular location is the nucleus. It localises to the nuclear pore complex. Component of the nuclear pore complex (NPC), a complex required for the trafficking across the nuclear envelope. Functions as a scaffolding element in the nuclear phase of the NPC essential for normal nucleocytoplasmic transport of proteins and mRNAs. May be involved in the retention of unspliced mRNAs in the nucleus. Probably mediates tpr anchoring to the nuclear membrane at NPC. Possible DNA-binding subunit of the nuclear pore complex (NPC). This Xenopus laevis (African clawed frog) protein is Nuclear pore complex protein Nup153 (nup153).